The primary structure comprises 357 residues: Serine proteinase inhibitor 1 (357 aa).

Belongs to the serpin family. Poxviruses subfamily.

It localises to the host cytoplasm. Functionally, this viral protein may be involved in the regulation of the complement cascade. Involved in red pock formation. The chain is Serine proteinase inhibitor 1 (SPI-1) from Oryctolagus cuniculus (Rabbit).